We begin with the raw amino-acid sequence, 214 residues long: tRNA (guanine-N(7)-)-methyltransferase (214 aa).

Residues Glu-44, Glu-69, Asp-96, and Asp-118 each coordinate S-adenosyl-L-methionine. The active site involves Asp-118. Lys-122 contacts substrate. Positions 124 to 129 are interaction with RNA; the sequence is RHEKRR. Residues Asp-154 and 192–195 contribute to the substrate site; that span reads TEYE.

Belongs to the class I-like SAM-binding methyltransferase superfamily. TrmB family.

It carries out the reaction guanosine(46) in tRNA + S-adenosyl-L-methionine = N(7)-methylguanosine(46) in tRNA + S-adenosyl-L-homocysteine. Its pathway is tRNA modification; N(7)-methylguanine-tRNA biosynthesis. In terms of biological role, catalyzes the formation of N(7)-methylguanine at position 46 (m7G46) in tRNA. This chain is tRNA (guanine-N(7)-)-methyltransferase, found in Lacticaseibacillus casei (strain BL23) (Lactobacillus casei).